Reading from the N-terminus, the 246-residue chain is Exosome complex component Rrp41 (246 aa).

This sequence belongs to the RNase PH family. Rrp41 subfamily. In terms of assembly, component of the archaeal exosome complex. Forms a hexameric ring-like arrangement composed of 3 Rrp41-Rrp42 heterodimers. The hexameric ring associates with a trimer of Rrp4 and/or Csl4 subunits.

It is found in the cytoplasm. Functionally, catalytic component of the exosome, which is a complex involved in RNA degradation. Has 3'-&gt;5' exoribonuclease activity. Can also synthesize heteromeric RNA-tails. The chain is Exosome complex component Rrp41 from Pyrobaculum neutrophilum (strain DSM 2338 / JCM 9278 / NBRC 100436 / V24Sta) (Thermoproteus neutrophilus).